The primary structure comprises 375 residues: Protein RIC-3 (375 aa).

The first 29 residues, 1–29 (MALSAVQKVVLFSCLVLCVSLLLPRAYIA), serve as a signal peptide directing secretion. Over 30–90 (RGKPAAQEGN…GGGGGTRPSL (61 aa)) the chain is Lumenal. Positions 38–47 (GNTGLFQSSG) are enriched in polar residues. The tract at residues 38 to 63 (GNTGLFQSSGHHPKPTDGRPGGAHFP) is disordered. Residues 91-111 (VGQIIPIYGFGILLYILYILF) traverse the membrane as a helical segment. Residues 112–375 (KLSSKGKSTK…RKRNTKGIEY (264 aa)) are Cytoplasmic-facing. A coiled-coil region spans residues 135 to 165 (KRKITDYELSQLQDKLKETEEAMEKIISRLG). The interval 251-375 (SAEQVAEQMG…RKRNTKGIEY (125 aa)) is disordered. Residues 286-296 (GDQQAQGTISA) show a composition bias toward polar residues. Over residues 305–319 (EDIEEDEDEDEDPEV) the composition is skewed to acidic residues. The span at 365 to 375 (LRKRNTKGIEY) shows a compositional bias: basic residues.

The protein belongs to the ric-3 family.

It localises to the endoplasmic reticulum membrane. In terms of biological role, molecular chaperone which facilitates proper subunit assembly andsurface trafficking of alpha-7 (CHRNA7) and alpha-8 (CHRNA8) nicotinic acetylcholine receptors. May also promote functional expression of homomeric serotoninergic 5-HT3 receptors, and of heteromeric acetylcholine receptors. This chain is Protein RIC-3 (ric3), found in Xenopus tropicalis (Western clawed frog).